The primary structure comprises 524 residues: AAA ATPase forming ring-shaped complexes (524 aa).

The interval 1–29 (MGMGQEKHTDAASQSRDPEAVAAHENDQL) is disordered. The stretch at 22-59 (AAHENDQLRQRNHALAKALTRATEELRKAKAQLEQFMA) forms a coiled coil. 250–255 (GNGKTL) contacts ATP.

This sequence belongs to the AAA ATPase family. As to quaternary structure, homohexamer. Assembles into a hexameric ring structure.

The protein is AAA ATPase forming ring-shaped complexes of Bifidobacterium animalis subsp. lactis (strain BB-12).